Here is a 200-residue protein sequence, read N- to C-terminus: Inner membrane protein E199L (200 aa).

Asparagine 131 is a glycosylation site (N-linked (GlcNAc...) asparagine; by host). Residues 150–170 (INVMNHPFLTLILIILILIII) form a helical membrane-spanning segment.

Belongs to the asfivirus E199L family. As to quaternary structure, interacts with host PYCR2; this interaction results in autophagy activation. In terms of processing, contains intramolecular disulfide bonds.

Its subcellular location is the virion membrane. The protein localises to the host membrane. Functionally, essential for viral fusion with host endosomal membrane and core release. Not required for virus morphogenesis and egress. Induces complete autophagy through the interaction with and down-regulation of host PYCR2. In Ornithodoros (relapsing fever ticks), this protein is Inner membrane protein E199L.